Consider the following 156-residue polypeptide: Small ribosomal subunit protein uS7 (156 aa).

Belongs to the universal ribosomal protein uS7 family. As to quaternary structure, part of the 30S ribosomal subunit. Contacts proteins S9 and S11.

Functionally, one of the primary rRNA binding proteins, it binds directly to 16S rRNA where it nucleates assembly of the head domain of the 30S subunit. Is located at the subunit interface close to the decoding center, probably blocks exit of the E-site tRNA. This is Small ribosomal subunit protein uS7 from Tropheryma whipplei (strain TW08/27) (Whipple's bacillus).